The primary structure comprises 212 residues: Thiamine-phosphate synthase (212 aa).

Residue 38 to 42 (QLREK) coordinates 4-amino-2-methyl-5-(diphosphooxymethyl)pyrimidine. Aspartate 71 and aspartate 90 together coordinate Mg(2+). Residue lysine 138 coordinates 4-amino-2-methyl-5-(diphosphooxymethyl)pyrimidine. Glycine 166 is a 2-[(2R,5Z)-2-carboxy-4-methylthiazol-5(2H)-ylidene]ethyl phosphate binding site.

The protein belongs to the thiamine-phosphate synthase family. Mg(2+) serves as cofactor.

It catalyses the reaction 2-[(2R,5Z)-2-carboxy-4-methylthiazol-5(2H)-ylidene]ethyl phosphate + 4-amino-2-methyl-5-(diphosphooxymethyl)pyrimidine + 2 H(+) = thiamine phosphate + CO2 + diphosphate. It carries out the reaction 2-(2-carboxy-4-methylthiazol-5-yl)ethyl phosphate + 4-amino-2-methyl-5-(diphosphooxymethyl)pyrimidine + 2 H(+) = thiamine phosphate + CO2 + diphosphate. The enzyme catalyses 4-methyl-5-(2-phosphooxyethyl)-thiazole + 4-amino-2-methyl-5-(diphosphooxymethyl)pyrimidine + H(+) = thiamine phosphate + diphosphate. It participates in cofactor biosynthesis; thiamine diphosphate biosynthesis; thiamine phosphate from 4-amino-2-methyl-5-diphosphomethylpyrimidine and 4-methyl-5-(2-phosphoethyl)-thiazole: step 1/1. In terms of biological role, condenses 4-methyl-5-(beta-hydroxyethyl)thiazole monophosphate (THZ-P) and 2-methyl-4-amino-5-hydroxymethyl pyrimidine pyrophosphate (HMP-PP) to form thiamine monophosphate (TMP). This Chlamydia caviae (strain ATCC VR-813 / DSM 19441 / 03DC25 / GPIC) (Chlamydophila caviae) protein is Thiamine-phosphate synthase.